Consider the following 71-residue polypeptide: 26S proteasome complex subunit rpn15 (71 aa).

Residues 1–38 (MSRAALPSLENLEDDDEFEDFATENWPMKDTELDTGDD) form a disordered region. Positions 11–22 (NLEDDDEFEDFA) are enriched in acidic residues. The interval 16–25 (DEFEDFATEN) is UBS-II. The interval 38–49 (DTLWENNWDDED) is UBS-I.

This sequence belongs to the DSS1/SEM1 family. Interacts with mlo3, rae1, nup98/nup189 and nup146. Interacts with rad24. Interacts (via UBSs) with ubiquitin (ubi3/ubi5).

Its subcellular location is the cytoplasm. The protein resides in the nucleus. In terms of biological role, versatile protein that might stabilize multiple protein complexes involved in diverse pathways. Subunit of the 26S proteasome which plays a role in ubiquitin-dependent proteolysis. Acts as a ubiquitin receptor of the 26S proteasome, by interacting with ubiquitin chains linked by 'Lys-63' and 'Lys-48'. Involved in nuclear export of specific sets of mRNAs. Links the mRNA adapter mlo3 to rae1 for targeting mRNA-protein complex to the proteins of the nucleoporin complex (NPC). Involved in recombinational repair of DNA. Plays a critical role in linking repair and checkpoint factors to damaged DNA sites by specifically recruiting rad24 and cdc25 to the DSBs. This chain is 26S proteasome complex subunit rpn15 (rpn15), found in Schizosaccharomyces pombe (strain 972 / ATCC 24843) (Fission yeast).